Here is a 210-residue protein sequence, read N- to C-terminus: Large ribosomal subunit protein uL4 (210 aa).

Positions His-49–Gly-76 are disordered. Over residues Lys-63 to Gly-76 the composition is skewed to basic residues.

Belongs to the universal ribosomal protein uL4 family. Part of the 50S ribosomal subunit.

Its function is as follows. One of the primary rRNA binding proteins, this protein initially binds near the 5'-end of the 23S rRNA. It is important during the early stages of 50S assembly. It makes multiple contacts with different domains of the 23S rRNA in the assembled 50S subunit and ribosome. In terms of biological role, forms part of the polypeptide exit tunnel. This is Large ribosomal subunit protein uL4 from Thermodesulfovibrio yellowstonii (strain ATCC 51303 / DSM 11347 / YP87).